Here is a 300-residue protein sequence, read N- to C-terminus: Arginine/serine-rich protein 1 (300 aa).

The segment at 1-142 (MSSAAVSKYV…RGRSHHRRSY (142 aa)) is disordered. The residue at position 17 (serine 17) is a Phosphoserine. Residues 23–36 (SPSTSGSGRSSRLS) are compositionally biased toward low complexity. Residues 37 to 104 (SRSRSRSSSR…RSRSRSRGHR (68 aa)) show a composition bias toward basic residues. Positions 105-115 (YYRDSRYEQPR) are enriched in basic and acidic residues. Positions 116–125 (RYYQSPSPYR) are enriched in low complexity. A phosphoserine mark is found at serine 120 and serine 122. Basic residues predominate over residues 126–141 (SRSRSRSRGRSHHRRS). Arginine 147 carries the omega-N-methylarginine modification. The interval 222 to 300 (QGAVSCSGPK…KSPYGLWIPV (79 aa)) is disordered. A compositionally biased stretch (basic and acidic residues) spans 268 to 277 (PLEKTTKAAV). At serine 284 the chain carries Phosphoserine.

The protein belongs to the RSRP family. In terms of processing, phosphorylated. Phosphorylation at Ser-120 and Ser-122 mediates the interaction with spliceosome proteins.

The protein resides in the nucleus. Probably acts as a spliceosomal factor that contributes to spliceosome assembly and regulates the isoform switching of proteins such as PARP6. The polypeptide is Arginine/serine-rich protein 1 (Rsrp1) (Rattus norvegicus (Rat)).